The sequence spans 571 residues: Urease subunit alpha (571 aa).

In terms of domain architecture, Urease spans 133-571 (GGIDTHVHFI…LPLTQRYFLF (439 aa)). Ni(2+) contacts are provided by His-138, His-140, and Lys-221. Lys-221 carries the N6-carboxylysine modification. His-223 is a substrate binding site. Residues His-250 and His-276 each coordinate Ni(2+). His-324 serves as the catalytic Proton donor. Asp-364 is a Ni(2+) binding site.

Belongs to the metallo-dependent hydrolases superfamily. Urease alpha subunit family. Heterotrimer of UreA (gamma), UreB (beta) and UreC (alpha) subunits. Three heterotrimers associate to form the active enzyme. Ni cation serves as cofactor. Post-translationally, carboxylation allows a single lysine to coordinate two nickel ions.

It localises to the cytoplasm. It catalyses the reaction urea + 2 H2O + H(+) = hydrogencarbonate + 2 NH4(+). It functions in the pathway nitrogen metabolism; urea degradation; CO(2) and NH(3) from urea (urease route): step 1/1. The chain is Urease subunit alpha from Staphylococcus aureus (strain bovine RF122 / ET3-1).